The chain runs to 31 residues: Photosystem II reaction center protein T (31 aa).

A helical membrane pass occupies residues 3-23 (AFSYTLLMALAAVTLFFAVAF).

It belongs to the PsbT family. PSII is composed of 1 copy each of membrane proteins PsbA, PsbB, PsbC, PsbD, PsbE, PsbF, PsbH, PsbI, PsbJ, PsbK, PsbL, PsbM, PsbT, PsbX, PsbY, Psb30/Ycf12, peripheral proteins PsbO, CyanoQ (PsbQ), PsbU, PsbV and a large number of cofactors. It forms dimeric complexes.

It localises to the cellular thylakoid membrane. Functionally, found at the monomer-monomer interface of the photosystem II (PS II) dimer, plays a role in assembly and dimerization of PSII. PSII is a light-driven water plastoquinone oxidoreductase, using light energy to abstract electrons from H(2)O, generating a proton gradient subsequently used for ATP formation. The sequence is that of Photosystem II reaction center protein T from Prochlorococcus marinus (strain MIT 9211).